The following is a 205-amino-acid chain: High frequency lysogenization protein HflD homolog (205 aa).

It belongs to the HflD family.

The protein localises to the cytoplasm. The protein resides in the cell inner membrane. This Shewanella sp. (strain MR-7) protein is High frequency lysogenization protein HflD homolog.